The following is a 269-amino-acid chain: 3-deoxy-manno-octulosonate cytidylyltransferase (269 aa).

The protein belongs to the KdsB family.

It is found in the cytoplasm. It catalyses the reaction 3-deoxy-alpha-D-manno-oct-2-ulosonate + CTP = CMP-3-deoxy-beta-D-manno-octulosonate + diphosphate. The protein operates within nucleotide-sugar biosynthesis; CMP-3-deoxy-D-manno-octulosonate biosynthesis; CMP-3-deoxy-D-manno-octulosonate from 3-deoxy-D-manno-octulosonate and CTP: step 1/1. Its pathway is bacterial outer membrane biogenesis; lipopolysaccharide biosynthesis. Its function is as follows. Activates KDO (a required 8-carbon sugar) for incorporation into bacterial lipopolysaccharide in Gram-negative bacteria. This is 3-deoxy-manno-octulosonate cytidylyltransferase from Cupriavidus taiwanensis (strain DSM 17343 / BCRC 17206 / CCUG 44338 / CIP 107171 / LMG 19424 / R1) (Ralstonia taiwanensis (strain LMG 19424)).